The following is a 224-amino-acid chain: Uridylate kinase (224 aa).

9–10 (GS) contributes to the ATP binding site. Residue glycine 43 coordinates UMP. 2 residues coordinate ATP: glycine 44 and arginine 48. Residues aspartate 65 and 113 to 119 (VVPGQTT) contribute to the UMP site. ATP-binding residues include threonine 139, phenylalanine 145, and aspartate 148.

This sequence belongs to the UMP kinase family. In terms of assembly, homohexamer.

It is found in the cytoplasm. The enzyme catalyses UMP + ATP = UDP + ADP. It participates in pyrimidine metabolism; CTP biosynthesis via de novo pathway; UDP from UMP (UMPK route): step 1/1. Its activity is regulated as follows. Inhibited by UTP. Catalyzes the reversible phosphorylation of UMP to UDP. In Methanocella arvoryzae (strain DSM 22066 / NBRC 105507 / MRE50), this protein is Uridylate kinase.